We begin with the raw amino-acid sequence, 63 residues long: Large ribosomal subunit protein bL32c (63 aa).

Positions 39–63 (SFSSGNEHPKPKGFSGQQTNNKIFE) are disordered. A compositionally biased stretch (polar residues) spans 53-63 (SGQQTNNKIFE).

Belongs to the bacterial ribosomal protein bL32 family.

It localises to the plastid. The protein localises to the chloroplast. This is Large ribosomal subunit protein bL32c from Triticum aestivum (Wheat).